The chain runs to 814 residues: Ubiquitin carboxyl-terminal hydrolase 45 (814 aa).

Residues 1–14 show a composition bias toward basic and acidic residues; sequence MRVKDPTKALPEKA. The interval 1-28 is disordered; sequence MRVKDPTKALPEKAKRSKRPTVPHDEDS. An interaction with ERCC1 region spans residues 1–62; that stretch reads MRVKDPTKAL…AIAENLWSVC (62 aa). Phosphoserine is present on residues S28 and S29. A UBP-type zinc finger spans residues 36-153; the sequence is LTCQHVSHAI…AQIVDFLQKH (118 aa). Residues C38, H40, C62, C65, C85, C88, C93, H101, H105, H114, C127, and C130 each coordinate Zn(2+). One can recognise a USP domain in the interval 190 to 813; sequence RGITNLGNTC…QAYLLFYERV (624 aa). The active-site Nucleophile is the C199. Disordered regions lie at residues 418–443 and 479–533; these read IENI…IHDR and ESRL…PDGP. The segment covering 432–443 has biased composition (basic and acidic residues); the sequence is SSKDKSQLIHDR. 2 positions are modified to phosphoserine: S508 and S526. The span at 515 to 527 shows a compositional bias: polar residues; that stretch reads KQTGLFRSSSGSG. H746 acts as the Proton acceptor in catalysis.

The protein belongs to the peptidase C19 family. In terms of assembly, interacts with ERCC1. The catalytically active form interacts with SPDL1. As to expression, widely expressed. High expression is detected in the cerebellum. In the eye, it is expressed at high levels in the optic nerve, sclera and retina, with relatively low levels in the choroid, lens and retinal pigment epithelium.

Its subcellular location is the photoreceptor inner segment. It is found in the cytoplasm. It localises to the nucleus. It catalyses the reaction Thiol-dependent hydrolysis of ester, thioester, amide, peptide and isopeptide bonds formed by the C-terminal Gly of ubiquitin (a 76-residue protein attached to proteins as an intracellular targeting signal).. Catalyzes the deubiquitination of SPDL1. Plays a role in the repair of UV-induced DNA damage via deubiquitination of ERCC1, promoting its recruitment to DNA damage sites. May be involved in the maintenance of photoreceptor function. May play a role in normal retinal development. Plays a role in cell migration. The chain is Ubiquitin carboxyl-terminal hydrolase 45 (USP45) from Homo sapiens (Human).